Here is a 593-residue protein sequence, read N- to C-terminus: Dihydroxy-acid dehydratase (593 aa).

Over residues M1 to E17 the composition is skewed to acidic residues. The disordered stretch occupies residues M1–P40. Residues G22 to P40 show a composition bias toward basic and acidic residues. C72 contributes to the [2Fe-2S] cluster binding site. D104 contributes to the Mg(2+) binding site. C145 lines the [2Fe-2S] cluster pocket. D146 and K147 together coordinate Mg(2+). The residue at position 147 (K147) is an N6-carboxylysine. C217 is a [2Fe-2S] cluster binding site. Residue E475 coordinates Mg(2+). S501 functions as the Proton acceptor in the catalytic mechanism.

This sequence belongs to the IlvD/Edd family. Homodimer. The cofactor is [2Fe-2S] cluster. Requires Mg(2+) as cofactor.

The catalysed reaction is (2R)-2,3-dihydroxy-3-methylbutanoate = 3-methyl-2-oxobutanoate + H2O. It carries out the reaction (2R,3R)-2,3-dihydroxy-3-methylpentanoate = (S)-3-methyl-2-oxopentanoate + H2O. It functions in the pathway amino-acid biosynthesis; L-isoleucine biosynthesis; L-isoleucine from 2-oxobutanoate: step 3/4. It participates in amino-acid biosynthesis; L-valine biosynthesis; L-valine from pyruvate: step 3/4. Functionally, functions in the biosynthesis of branched-chain amino acids. Catalyzes the dehydration of (2R,3R)-2,3-dihydroxy-3-methylpentanoate (2,3-dihydroxy-3-methylvalerate) into 2-oxo-3-methylpentanoate (2-oxo-3-methylvalerate) and of (2R)-2,3-dihydroxy-3-methylbutanoate (2,3-dihydroxyisovalerate) into 2-oxo-3-methylbutanoate (2-oxoisovalerate), the penultimate precursor to L-isoleucine and L-valine, respectively. The chain is Dihydroxy-acid dehydratase from Natronomonas pharaonis (strain ATCC 35678 / DSM 2160 / CIP 103997 / JCM 8858 / NBRC 14720 / NCIMB 2260 / Gabara) (Halobacterium pharaonis).